Consider the following 419-residue polypeptide: UDP-N-acetylglucosamine 1-carboxyvinyltransferase (419 aa).

22–23 (KN) serves as a coordination point for phosphoenolpyruvate. A UDP-N-acetyl-alpha-D-glucosamine-binding site is contributed by arginine 92. The Proton donor role is filled by cysteine 116. Cysteine 116 carries the 2-(S-cysteinyl)pyruvic acid O-phosphothioketal modification. UDP-N-acetyl-alpha-D-glucosamine-binding positions include 121-125 (RPVDQ), aspartate 306, and isoleucine 328.

The protein belongs to the EPSP synthase family. MurA subfamily.

It localises to the cytoplasm. It catalyses the reaction phosphoenolpyruvate + UDP-N-acetyl-alpha-D-glucosamine = UDP-N-acetyl-3-O-(1-carboxyvinyl)-alpha-D-glucosamine + phosphate. The protein operates within cell wall biogenesis; peptidoglycan biosynthesis. In terms of biological role, cell wall formation. Adds enolpyruvyl to UDP-N-acetylglucosamine. Target for the antibiotic phosphomycin. The polypeptide is UDP-N-acetylglucosamine 1-carboxyvinyltransferase (Acinetobacter guillouiae (Acinetobacter genomosp. 11)).